The chain runs to 129 residues: Glycine cleavage system H protein (129 aa).

A Lipoyl-binding domain is found at 24–106; it reads TYTVGITEHA…YAGGWIFKIK (83 aa). Lys65 is modified (N6-lipoyllysine).

This sequence belongs to the GcvH family. In terms of assembly, the glycine cleavage system is composed of four proteins: P, T, L and H. It depends on (R)-lipoate as a cofactor.

In terms of biological role, the glycine cleavage system catalyzes the degradation of glycine. The H protein shuttles the methylamine group of glycine from the P protein to the T protein. This is Glycine cleavage system H protein from Shigella dysenteriae serotype 1 (strain Sd197).